The sequence spans 152 residues: Mitochondrial fission 1 protein (152 aa).

The residue at position 1 (M1) is an N-acetylmethionine. The Cytoplasmic portion of the chain corresponds to 1 to 122; that stretch reads MEAVLNELVS…LIDKAMKKDG (122 aa). Residue S10 is modified to Phosphoserine. Residues 71-104 form a TPR repeat; that stretch reads RDYVFYLAVGNYRLKEYEKALKYVRGLLQTEPQN. A helical transmembrane segment spans residues 123-143; it reads LVGMAIVGGMALGVAGLAGLI. At 144–152 the chain is on the mitochondrial intermembrane side; it reads GLAVSKSKS.

It belongs to the FIS1 family. Interacts with DNM1L/DLP1 through the TPR region; may form part of a larger protein complex at the endoplasmic reticulum-mitochondrial interface during mitochondrial fission. Interacts with MARCHF5. Interacts with MIEF1. Interacts with PEX11A, PEX11B and PEX11G. Ubiquitinated by MARCHF5.

It is found in the mitochondrion outer membrane. It localises to the peroxisome membrane. Its function is as follows. Involved in the fragmentation of the mitochondrial network and its perinuclear clustering. Plays a minor role in the recruitment and association of the fission mediator dynamin-related protein 1 (DNM1L) to the mitochondrial surface and mitochondrial fission. May not be essential for the assembly of functional fission complexes and the subsequent membrane scission event. Also mediates peroxisomal fission. May act when the products of fission are directed toward mitochondrial homeostasis, mitophagy, or apoptosis. Can induce cytochrome c release from the mitochondrion to the cytosol, ultimately leading to apoptosis. This Mus musculus (Mouse) protein is Mitochondrial fission 1 protein (Fis1).